Consider the following 1267-residue polypeptide: DNA-directed RNA polymerase subunit beta (1267 aa).

This sequence belongs to the RNA polymerase beta chain family. The RNAP catalytic core consists of 2 alpha, 1 beta, 1 beta' and 1 omega subunit. When a sigma factor is associated with the core the holoenzyme is formed, which can initiate transcription.

The catalysed reaction is RNA(n) + a ribonucleoside 5'-triphosphate = RNA(n+1) + diphosphate. DNA-dependent RNA polymerase catalyzes the transcription of DNA into RNA using the four ribonucleoside triphosphates as substrates. The protein is DNA-directed RNA polymerase subunit beta (rpoB) of Carsonella ruddii (strain PV).